A 145-amino-acid polypeptide reads, in one-letter code: Superoxide dismutase [Mn/Fe] (145 aa).

Fe(3+) contacts are provided by His-10 and His-64. Positions 10 and 64 each coordinate Mn(2+). A disordered region spans residues 126–145 (TSTANQDTPISEGKKPILGL).

The protein belongs to the iron/manganese superoxide dismutase family. The cofactor is Mn(2+). Fe(3+) serves as cofactor.

It catalyses the reaction 2 superoxide + 2 H(+) = H2O2 + O2. Its function is as follows. Destroys superoxide anion radicals which are normally produced within the cells and which are toxic to biological systems. Catalyzes the dismutation of superoxide anion radicals into O2 and H2O2 by successive reduction and oxidation of the transition metal ion at the active site. In Streptococcus oralis, this protein is Superoxide dismutase [Mn/Fe] (sodA).